The chain runs to 380 residues: Methenyltetrahydrofolate synthase domain-containing protein (380 aa).

The segment covering 245–258 (EEQAGKDVTLRDGP) has biased composition (basic and acidic residues). Disordered regions lie at residues 245–283 (EEQA…PLSS) and 361–380 (LVGS…IAGP). In terms of domain architecture, RRM spans 282–355 (SSVQIGNLPR…NTVRVVLARQ (74 aa)).

The chain is Methenyltetrahydrofolate synthase domain-containing protein (MTHFSD) from Bos taurus (Bovine).